Consider the following 609-residue polypeptide: Vanadium chloroperoxidase (609 aa).

Vanadate is bound by residues K353, R360, S402, G403, H404, R490, and H496. The Proton donor role is filled by H404. The tract at residues 569-609 is disordered; it reads KPTPPEIQPMPQETPVQKPVGQQPVKGMWEEEQAPVVKEAP.

Belongs to the vanadium-dependent haloperoxidase family. In terms of assembly, homotetramer. Vanadate serves as cofactor. Post-translationally, the N-terminus is blocked.

It is found in the secreted. It catalyses the reaction RH + Cl(-) + H2O2 = RCl + 2 H2O.. Its function is as follows. Catalyzes the oxidation of chloride in the presence of hydrogen peroxide to hypochlorous acid (ClOH), which in turn can react with a nucleophilic acceptor (RH), to form a chlorinated compound. This Curvularia inaequalis (Helminthosporium inaequale) protein is Vanadium chloroperoxidase (CPO).